Here is a 227-residue protein sequence, read N- to C-terminus: tRNA (guanine-N(1)-)-methyltransferase (227 aa).

S-adenosyl-L-methionine is bound by residues Gly-111 and 135-140 (LGDYVL).

This sequence belongs to the RNA methyltransferase TrmD family. In terms of assembly, homodimer.

The protein resides in the cytoplasm. It carries out the reaction guanosine(37) in tRNA + S-adenosyl-L-methionine = N(1)-methylguanosine(37) in tRNA + S-adenosyl-L-homocysteine + H(+). In terms of biological role, specifically methylates guanosine-37 in various tRNAs. The sequence is that of tRNA (guanine-N(1)-)-methyltransferase from Leifsonia xyli subsp. xyli (strain CTCB07).